A 98-amino-acid polypeptide reads, in one-letter code: NADH-ubiquinone oxidoreductase chain 4L (98 aa).

3 helical membrane-spanning segments follow: residues Met-1–Ile-21, Ser-29–Leu-49, and Ile-58–Leu-78.

The protein belongs to the complex I subunit 4L family. Core subunit of respiratory chain NADH dehydrogenase (Complex I) which is composed of 45 different subunits.

It localises to the mitochondrion inner membrane. It carries out the reaction a ubiquinone + NADH + 5 H(+)(in) = a ubiquinol + NAD(+) + 4 H(+)(out). Functionally, core subunit of the mitochondrial membrane respiratory chain NADH dehydrogenase (Complex I) which catalyzes electron transfer from NADH through the respiratory chain, using ubiquinone as an electron acceptor. Part of the enzyme membrane arm which is embedded in the lipid bilayer and involved in proton translocation. In Nasalis larvatus (Proboscis monkey), this protein is NADH-ubiquinone oxidoreductase chain 4L (MT-ND4L).